The primary structure comprises 208 residues: Pyridoxine/pyridoxamine 5'-phosphate oxidase (208 aa).

Residues 55 to 60 (RMVLLK), 70 to 71 (YT), lysine 76, lysine 77, and glutamine 99 contribute to the FMN site. Lysine 60 is a binding site for substrate. Substrate-binding residues include tyrosine 117, arginine 121, and serine 125. Residues 134-135 (QS) and tryptophan 179 each bind FMN. 185 to 187 (RLH) contributes to the substrate binding site. Arginine 189 provides a ligand contact to FMN.

The protein belongs to the pyridoxamine 5'-phosphate oxidase family. Homodimer. Requires FMN as cofactor.

The enzyme catalyses pyridoxamine 5'-phosphate + O2 + H2O = pyridoxal 5'-phosphate + H2O2 + NH4(+). The catalysed reaction is pyridoxine 5'-phosphate + O2 = pyridoxal 5'-phosphate + H2O2. It participates in cofactor metabolism; pyridoxal 5'-phosphate salvage; pyridoxal 5'-phosphate from pyridoxamine 5'-phosphate: step 1/1. Its pathway is cofactor metabolism; pyridoxal 5'-phosphate salvage; pyridoxal 5'-phosphate from pyridoxine 5'-phosphate: step 1/1. In terms of biological role, catalyzes the oxidation of either pyridoxine 5'-phosphate (PNP) or pyridoxamine 5'-phosphate (PMP) into pyridoxal 5'-phosphate (PLP). The sequence is that of Pyridoxine/pyridoxamine 5'-phosphate oxidase from Brucella abortus biovar 1 (strain 9-941).